The following is a 168-amino-acid chain: Small ribosomal subunit protein uS9 (168 aa).

Positions 1 to 38 (MAKIADSIDSAQADSVENVESYSTETPESAAPAAPRPV) are disordered. Residues 9–22 (DSAQADSVENVESY) show a composition bias toward polar residues. Residues 23–37 (STETPESAAPAAPRP) are compositionally biased toward low complexity.

It belongs to the universal ribosomal protein uS9 family.

The protein is Small ribosomal subunit protein uS9 of Leifsonia xyli subsp. xyli (strain CTCB07).